Reading from the N-terminus, the 332-residue chain is Glycerol-3-phosphate dehydrogenase [NAD(P)+] (332 aa).

NADPH contacts are provided by serine 11, phenylalanine 12, lysine 32, and lysine 106. Residues lysine 106, glycine 137, and serine 139 each coordinate sn-glycerol 3-phosphate. NADPH is bound at residue alanine 141. Residues lysine 192, aspartate 245, serine 255, arginine 256, and asparagine 257 each coordinate sn-glycerol 3-phosphate. Lysine 192 functions as the Proton acceptor in the catalytic mechanism. Arginine 256 lines the NADPH pocket. Residues valine 280 and glutamate 282 each coordinate NADPH.

This sequence belongs to the NAD-dependent glycerol-3-phosphate dehydrogenase family.

The protein localises to the cytoplasm. It catalyses the reaction sn-glycerol 3-phosphate + NAD(+) = dihydroxyacetone phosphate + NADH + H(+). It carries out the reaction sn-glycerol 3-phosphate + NADP(+) = dihydroxyacetone phosphate + NADPH + H(+). Its pathway is membrane lipid metabolism; glycerophospholipid metabolism. Its function is as follows. Catalyzes the reduction of the glycolytic intermediate dihydroxyacetone phosphate (DHAP) to sn-glycerol 3-phosphate (G3P), the key precursor for phospholipid synthesis. The protein is Glycerol-3-phosphate dehydrogenase [NAD(P)+] of Staphylococcus aureus (strain USA300).